A 478-amino-acid chain; its full sequence is Cytochrome c-552 (478 aa).

The first 26 residues, 1–26 (MARKTLRARRFFSLIFPFFFITSVYA), serve as a signal peptide directing secretion. Position 94 (histidine 94) interacts with heme c. 3 residues coordinate heme: cysteine 122, cysteine 125, and lysine 126. 6 residues coordinate heme c: cysteine 160, cysteine 163, histidine 164, cysteine 209, cysteine 212, and histidine 213. Residues glutamate 215, tyrosine 216, lysine 261, and glutamine 263 each coordinate Ca(2+). Tyrosine 216 lines the substrate pocket. Histidine 264 lines the substrate pocket. Heme c-binding residues include histidine 275, cysteine 282, cysteine 285, histidine 286, histidine 301, cysteine 314, cysteine 317, histidine 318, and histidine 393.

Belongs to the cytochrome c-552 family. Ca(2+) serves as cofactor. Requires heme c as cofactor.

Its subcellular location is the periplasm. It catalyses the reaction 6 Fe(III)-[cytochrome c] + NH4(+) + 2 H2O = 6 Fe(II)-[cytochrome c] + nitrite + 8 H(+). The protein operates within nitrogen metabolism; nitrate reduction (assimilation). Its function is as follows. Catalyzes the reduction of nitrite to ammonia, consuming six electrons in the process. In Salmonella dublin (strain CT_02021853), this protein is Cytochrome c-552.